The sequence spans 170 residues: NADH-quinone oxidoreductase subunit B (170 aa).

The [4Fe-4S] cluster site is built by C37, C38, C102, and C131.

It belongs to the complex I 20 kDa subunit family. In terms of assembly, NDH-1 is composed of 14 different subunits. Subunits NuoB, C, D, E, F, and G constitute the peripheral sector of the complex. Requires [4Fe-4S] cluster as cofactor.

The protein resides in the cell inner membrane. It carries out the reaction a quinone + NADH + 5 H(+)(in) = a quinol + NAD(+) + 4 H(+)(out). Its function is as follows. NDH-1 shuttles electrons from NADH, via FMN and iron-sulfur (Fe-S) centers, to quinones in the respiratory chain. The immediate electron acceptor for the enzyme in this species is believed to be ubiquinone. Couples the redox reaction to proton translocation (for every two electrons transferred, four hydrogen ions are translocated across the cytoplasmic membrane), and thus conserves the redox energy in a proton gradient. This Geotalea uraniireducens (strain Rf4) (Geobacter uraniireducens) protein is NADH-quinone oxidoreductase subunit B.